Consider the following 125-residue polypeptide: Gem-associated protein 7 (125 aa).

At M1 the chain carries N-acetylmethionine. The SUZ-C domain maps to 1–29 (MQTPLATPVPVLRLPRGPDGSNRGFAPDG). A disordered region spans residues 1–52 (MQTPLATPVPVLRLPRGPDGSNRGFAPDGRRAPPKPEVPEPPESRESWEQQA). T3 bears the Phosphothreonine mark. The 67-residue stretch at 59-125 (RYLRSLLAMV…SDIISYTFKP (67 aa)) folds into the Sm domain.

This sequence belongs to the gemin-7 family. In terms of assembly, part of the core SMN complex that contains SMN1, GEMIN2/SIP1, DDX20/GEMIN3, GEMIN4, GEMIN5, GEMIN6, GEMIN7, GEMIN8 and STRAP/UNRIP. Part of the SMN-Sm complex that contains SMN1, GEMIN2/SIP1, DDX20/GEMIN3, GEMIN4, GEMIN5, GEMIN6, GEMIN7, GEMIN8, STRAP/UNRIP and the Sm proteins SNRPB, SNRPD1, SNRPD2, SNRPD3, SNRPE, SNRPF and SNRPG. Interacts with GEMIN6; the interaction is direct. Interacts with STRAP/UNRIP; the interaction is direct. Interacts with GEMIN8; the interaction is direct. Interacts with SNRPB, SNRPD2, SNRPD3 and SNRPE; the interaction is direct.

It is found in the nucleus. The protein resides in the nucleoplasm. Its subcellular location is the gem. The protein localises to the cytoplasm. In terms of biological role, the SMN complex catalyzes the assembly of small nuclear ribonucleoproteins (snRNPs), the building blocks of the spliceosome, and thereby plays an important role in the splicing of cellular pre-mRNAs. Most spliceosomal snRNPs contain a common set of Sm proteins SNRPB, SNRPD1, SNRPD2, SNRPD3, SNRPE, SNRPF and SNRPG that assemble in a heptameric protein ring on the Sm site of the small nuclear RNA to form the core snRNP (Sm core). In the cytosol, the Sm proteins SNRPD1, SNRPD2, SNRPE, SNRPF and SNRPG are trapped in an inactive 6S pICln-Sm complex by the chaperone CLNS1A that controls the assembly of the core snRNP. To assemble core snRNPs, the SMN complex accepts the trapped 5Sm proteins from CLNS1A forming an intermediate. Binding of snRNA inside 5Sm triggers eviction of the SMN complex, thereby allowing binding of SNRPD3 and SNRPB to complete assembly of the core snRNP. This chain is Gem-associated protein 7 (GEMIN7), found in Bos taurus (Bovine).